Here is a 618-residue protein sequence, read N- to C-terminus: MKTVSTSDRLAELRGLMRARSIDVYIVPTEDAHSSEYIAPCDGRREFISGFSGSAGTAVVTNDKAALATDGRYFNQAATELDNNWELLKQGQPDVPTWQEWTADQAAGGKTVGVDPTLLSSSEAKALQEKIKSKGGNDLVAISDNLVDLVWGRHKPSRPSNPIAFLPKKYSGKDTEPKLKELREVLEKKKVFGFVISTLDEIAWLFNLRGSDIPYNPVFFSYAVVTADNATLYVDASKLSEESHAYLKENKVDIRPYESIFEDSEVLAKSLKPTEDQGEESKVKKLAISNKTSWALKLALGGDGAVDEIKSPVCDAKAIKNETELEGMRQCHIRDGAALIEYFAWLEDQVANKKATLNEVQAATKLENLRAKHEDFVGLSFTTISAVGANAAVIHYKPEEDSCATIDADSVYLCDSGAQFLDGTTDTTRTLHFGKPSEAERKAYTLVLKGNMALDMAIFPKGTTGFALDPFARQFLWQEGLDYRHGTGHGVGSYLNVHEGPIGIGTRKHYAGVPLAPGNVTSIEPGFYEDGSYGIRIENIAMIREVETKHMFGDKPYLGFEHVTMVPYCRRLIDESLLTPREKQWLNDYNKLILDKTSGFFKDDNLTMAWLERETQPY.

Mn(2+)-binding residues include Asp-415, Asp-426, Glu-524, and Glu-538.

It belongs to the peptidase M24B family. It depends on Mn(2+) as a cofactor.

It catalyses the reaction Release of any N-terminal amino acid, including proline, that is linked to proline, even from a dipeptide or tripeptide.. Functionally, catalyzes the removal of a penultimate prolyl residue from the N-termini of peptides. The protein is Probable Xaa-Pro aminopeptidase P (AMPP) of Pyricularia oryzae (strain 70-15 / ATCC MYA-4617 / FGSC 8958) (Rice blast fungus).